The sequence spans 513 residues: Probable hydrolase YhcX (513 aa).

The 199-residue stretch at 14–212 (MVIRNIEEKD…YATLMEWNNV (199 aa)) folds into the N-acetyltransferase domain. Residues 229–484 (VRICVIQYEM…EMVVIGDVDL (256 aa)) enclose the CN hydrolase domain. Glutamate 270 (proton acceptor) is an active-site residue. The active-site Proton donor is the lysine 345. Cysteine 379 acts as the Nucleophile in catalysis.

It belongs to the carbon-nitrogen hydrolase superfamily. NIT1/NIT2 family.

This chain is Probable hydrolase YhcX (yhcX), found in Bacillus subtilis (strain 168).